Reading from the N-terminus, the 416-residue chain is D-amino acid dehydrogenase (416 aa).

3–17 serves as a coordination point for FAD; sequence ITILGSGVIGVTTAY.

It belongs to the DadA oxidoreductase family. The cofactor is FAD.

The catalysed reaction is a D-alpha-amino acid + A + H2O = a 2-oxocarboxylate + AH2 + NH4(+). The protein operates within amino-acid degradation; D-alanine degradation; NH(3) and pyruvate from D-alanine: step 1/1. In terms of biological role, oxidative deamination of D-amino acids. The chain is D-amino acid dehydrogenase from Brucella abortus (strain S19).